A 381-amino-acid chain; its full sequence is Protein TRIGALACTOSYLDIACYLGLYCEROL 2, chloroplastic (381 aa).

The N-terminal 45 residues, 1 to 45, are a transit peptide targeting the chloroplast; that stretch reads MIGNPVIQVPSSLMPSSSMIACPRVSPNGVPYLPPKPRTRHLVVR. Topologically, residues 46–96 are stromal; that stretch reads AASNSDAAHGQPSSDGGKNPLTVVLDVPRNIWRQTLKPLSDFGFGKRSIWE. A helical transmembrane segment spans residues 97–117; it reads GGVGLFIVSGATLLALSWAWL. The Chloroplast intermembrane portion of the chain corresponds to 118–381; it reads RGFQMRSKFR…LLIKSLSRLL (264 aa).

In terms of assembly, homomultimer. Substrate-binding subunit of the TGD complex, a lipid translocator at the inner chloroplast envelope membrane made of TGD1, TGD2 and TGD3. Interacts with TGD1 and TGD3 with an overall subunit stoichiometry of 2 TGD1, 2 TGD3 and 8 to 12 TGD2. Interacts with TGD5.

Its subcellular location is the plastid. It is found in the chloroplast inner membrane. Functionally, component of a phosphatidic acid/lipid transport complex in the chloroplast envelope. Specifically binds phosphatidic acid (PA). Involved in lipid transfer from the endoplasmic reticulum (ER) to plastids, and necessary for thylakoids formation. This chain is Protein TRIGALACTOSYLDIACYLGLYCEROL 2, chloroplastic, found in Arabidopsis thaliana (Mouse-ear cress).